Here is a 1114-residue protein sequence, read N- to C-terminus: Hephaestin-like protein (1114 aa).

Positions M1–A26 are cleaved as a signal peptide. 6 Plastocyanin-like domains span residues I27–R210, Q218–C365, K380–C562, T572–C719, K730–C915, and T924–A1114. Residues I27–A1091 are Extracellular-facing. The N-linked (GlcNAc...) asparagine glycan is linked to N121. Cu cation contacts are provided by H129, H131, H189, and H191. A disulfide bridge connects residues C183 and C209. N236 is a glycosylation site (N-linked (GlcNAc...) asparagine). An intrachain disulfide couples C284 to C365. Cu cation contacts are provided by H303, C346, and H351. Residues N361, N478, and N489 are each glycosylated (N-linked (GlcNAc...) asparagine). 2 disulfides stabilise this stretch: C536-C562 and C638-C719. 4 residues coordinate Cu cation: H657, C700, H705, and M710. A glycan (N-linked (GlcNAc...) asparagine) is linked at N831. An intrachain disulfide couples C889 to C915. A glycan (N-linked (GlcNAc...) asparagine) is linked at N944. H1014, H1017, H1019, H1059, C1060, H1061, H1065, and M1070 together coordinate Cu cation. The chain crosses the membrane as a helical span at residues S1092 to L1112. Residues K1113 to A1114 are Cytoplasmic-facing.

It belongs to the multicopper oxidase family. Requires Cu cation as cofactor. As to expression, component of the acid-insoluble and acid-soluble organic matrix of the aragonitic skeleton (at protein level).

It localises to the membrane. Functionally, may function as a ferroxidase and may be involved in copper transport and homeostasis. The chain is Hephaestin-like protein from Acropora millepora (Staghorn coral).